The following is a 460-amino-acid chain: WD repeat-containing protein 41 (460 aa).

WD repeat units lie at residues 40 to 79 (EAHR…KLLE), 82 to 128 (GHTQ…QIQR), 131 to 168 (CFQS…LCKT), 220 to 258 (DHQD…VQAC), 321 to 359 (AHDS…QLAA), and 403 to 441 (GHSS…SGVR).

Component of the C9orf72-SMCR8 complex, at least composed of C9orf72, SMCR8 and WDR41. The complex is formed of two protomers, each individually consisting of one molecule each of C9orf72, SMCR8 and WDR41. The protomers homodimerize via an interaction between C9orf72 (via C-terminus) and SMCR8 (via N-terminus). Within each protomer SMCR8 (via DENN domain) acts as a bridging protein between WDR41 (via C-terminus and N-terminus) and C9orf72 (via C-terminus). The C9orf72-SMCR8 complex associates with the ULK1/ATG1 kinase complex.

The protein resides in the cytoplasm. In terms of biological role, non-catalytic component of the C9orf72-SMCR8 complex, a complex that has guanine nucleotide exchange factor (GEF) activity and regulates autophagy. The C9orf72-SMCR8 complex promotes the exchange of GDP to GTP, converting inactive GDP-bound RAB8A and RAB39B into their active GTP-bound form, thereby promoting autophagosome maturation. As part of the C9orf72-SMCR8 complex, stimulates RAB8A and RAB11A GTPase activity in vitro, however WDR42 is shown not be an essential complex component for this function. The C9orf72-SMCR8 complex also acts as a negative regulator of autophagy initiation by interacting with the ULK1/ATG1 kinase complex and inhibiting its protein kinase activity. This Mus musculus (Mouse) protein is WD repeat-containing protein 41.